Here is a 94-residue protein sequence, read N- to C-terminus: Exodeoxyribonuclease 7 small subunit (94 aa).

Belongs to the XseB family. Heterooligomer composed of large and small subunits.

Its subcellular location is the cytoplasm. The catalysed reaction is Exonucleolytic cleavage in either 5'- to 3'- or 3'- to 5'-direction to yield nucleoside 5'-phosphates.. Bidirectionally degrades single-stranded DNA into large acid-insoluble oligonucleotides, which are then degraded further into small acid-soluble oligonucleotides. In Ralstonia nicotianae (strain ATCC BAA-1114 / GMI1000) (Ralstonia solanacearum), this protein is Exodeoxyribonuclease 7 small subunit.